Reading from the N-terminus, the 229-residue chain is Peptidase E (229 aa).

Catalysis depends on charge relay system residues serine 120, aspartate 135, and histidine 157.

The protein belongs to the peptidase S51 family.

The protein localises to the cytoplasm. The catalysed reaction is Dipeptidase E catalyzes the hydrolysis of dipeptides Asp-|-Xaa. It does not act on peptides with N-terminal Glu, Asn or Gln, nor does it cleave isoaspartyl peptides.. Hydrolyzes dipeptides containing N-terminal aspartate residues. May play a role in allowing the cell to use peptide aspartate to spare carbon otherwise required for the synthesis of the aspartate family of amino acids. This is Peptidase E from Citrobacter koseri (strain ATCC BAA-895 / CDC 4225-83 / SGSC4696).